A 791-amino-acid chain; its full sequence is RAS guanyl-releasing protein 1 (791 aa).

One can recognise an N-terminal Ras-GEF domain in the interval 49-172; it reads LGKLSKGASL…RLIDTAQINS (124 aa). Residues 53–106 are ras exchanger motif region; required for transforming activity; it reads SKGASLDDLIQMCIQAFDLDGNMGQNSELLQIMLTMHGFLLPSTELLMKLRTLY. The Ras-GEF domain occupies 201 to 432; sequence EPQELAEHLT…YELSYAREPR (232 aa). EF-hand domains are found at residues 466–501 and 502–528; these read HVQR…FPFS and FCVM…ASSI. Ca(2+) contacts are provided by Asp479, Asp481, Asp483, Tyr485, Glu490, Asp506, Asp508, Glu510, and Glu517. Residues 537–587 form a Phorbol-ester/DAG-type zinc finger; it reads LHNFQETTYLRPTFCDNCAGFLWGVIKQGYRCKDCGMNCHKQCKELVVFEC. Residues 683–695 show a composition bias toward polar residues; sequence QVPSPQRSRTPGL. A disordered region spans residues 683 to 715; that stretch reads QVPSPQRSRTPGLTSHLPISPMPSPCPSPVPTR. Pro residues predominate over residues 702-712; it reads SPMPSPCPSPV. Residues 728–785 are a coiled coil; the sequence is IRKARAELRGGKAGIQELEKEKALLKEENTTLKIQLKDAQRRVETLRAELRKYVLDSD.

It belongs to the RASGRP family.

It is found in the cytoplasm. It localises to the cytosol. Its subcellular location is the cell membrane. The protein localises to the golgi apparatus membrane. The protein resides in the endoplasmic reticulum membrane. Regulated by F-actin polymerization and probably by calcium. Its function is as follows. Functions as a diacylglycerol (DAG)-regulated nucleotide exchange factor specifically activating Ras through the exchange of bound GDP for GTP. This is RAS guanyl-releasing protein 1 (rasgrp1) from Xenopus tropicalis (Western clawed frog).